The following is a 600-amino-acid chain: Putative fucosyltransferase R654 (600 aa).

It belongs to the glycosyltransferase 10 family.

The protein is Putative fucosyltransferase R654 of Acanthamoeba polyphaga mimivirus (APMV).